The primary structure comprises 274 residues: Undecaprenyl-diphosphatase (274 aa).

6 helical membrane passes run alanine 44 to tryptophan 64, leucine 85 to isoleucine 105, leucine 109 to alanine 129, alanine 185 to leucine 205, alanine 215 to valine 235, and phenylalanine 250 to valine 270.

It belongs to the UppP family.

Its subcellular location is the cell inner membrane. The enzyme catalyses di-trans,octa-cis-undecaprenyl diphosphate + H2O = di-trans,octa-cis-undecaprenyl phosphate + phosphate + H(+). Its function is as follows. Catalyzes the dephosphorylation of undecaprenyl diphosphate (UPP). Confers resistance to bacitracin. In Acidovorax ebreus (strain TPSY) (Diaphorobacter sp. (strain TPSY)), this protein is Undecaprenyl-diphosphatase.